Reading from the N-terminus, the 698-residue chain is Ion-translocating oxidoreductase complex subunit C (698 aa).

4Fe-4S ferredoxin-type domains lie at 366 to 397 (TEMG…QQLY) and 407 to 436 (KARN…VQYY). Residues Cys-377, Cys-380, Cys-383, Cys-387, Cys-416, Cys-419, Cys-422, and Cys-426 each contribute to the [4Fe-4S] cluster site.

Belongs to the 4Fe4S bacterial-type ferredoxin family. RnfC subfamily. As to quaternary structure, the complex is composed of six subunits: RnfA, RnfB, RnfC, RnfD, RnfE and RnfG. [4Fe-4S] cluster is required as a cofactor.

Its subcellular location is the cell inner membrane. Its function is as follows. Part of a membrane-bound complex that couples electron transfer with translocation of ions across the membrane. The polypeptide is Ion-translocating oxidoreductase complex subunit C (Yersinia pseudotuberculosis serotype O:1b (strain IP 31758)).